The following is a 192-amino-acid chain: Phosphoheptose isomerase (192 aa).

The region spanning 37–192 (LADSFKQEGK…IQLVEKEMAK (156 aa)) is the SIS domain. Substrate is bound at residue 52 to 54 (NGG). Residues His61 and Glu65 each coordinate Zn(2+). Substrate-binding positions include Glu65, 93–94 (ND), 119–121 (STS), Ser124, and Gln172. Zn(2+)-binding residues include Gln172 and His180.

The protein belongs to the SIS family. GmhA subfamily. Homotetramer. Zn(2+) serves as cofactor.

It localises to the cytoplasm. It carries out the reaction 2 D-sedoheptulose 7-phosphate = D-glycero-alpha-D-manno-heptose 7-phosphate + D-glycero-beta-D-manno-heptose 7-phosphate. It participates in carbohydrate biosynthesis; D-glycero-D-manno-heptose 7-phosphate biosynthesis; D-glycero-alpha-D-manno-heptose 7-phosphate and D-glycero-beta-D-manno-heptose 7-phosphate from sedoheptulose 7-phosphate: step 1/1. Functionally, catalyzes the isomerization of sedoheptulose 7-phosphate in D-glycero-D-manno-heptose 7-phosphate. This is Phosphoheptose isomerase from Aeromonas hydrophila subsp. hydrophila (strain ATCC 7966 / DSM 30187 / BCRC 13018 / CCUG 14551 / JCM 1027 / KCTC 2358 / NCIMB 9240 / NCTC 8049).